Consider the following 465-residue polypeptide: Chromosomal replication initiator protein DnaA (465 aa).

Residues 1-85 (MSGFWESCLQ…IALVIGSGKA (85 aa)) are domain I, interacts with DnaA modulators. Residues 85–129 (ATAARIQATTTDSGQNAPANPATTSEKRTAASEKARGKGSNYEKS) form a domain II region. Positions 93–108 (TTTDSGQNAPANPATT) are enriched in polar residues. Residues 93 to 125 (TTTDSGQNAPANPATTSEKRTAASEKARGKGSN) form a disordered region. Positions 109 to 125 (SEKRTAASEKARGKGSN) are enriched in basic and acidic residues. The tract at residues 130-346 (RLFPSFTFDN…GALKKVLAYS (217 aa)) is domain III, AAA+ region. ATP is bound by residues Gly-174, Gly-176, Lys-177, and Thr-178. Residues 347–465 (SFHGRVIALD…LHVLLQVLKG (119 aa)) form a domain IV, binds dsDNA region.

Belongs to the DnaA family. As to quaternary structure, oligomerizes as a right-handed, spiral filament on DNA at oriC.

Its subcellular location is the cytoplasm. Functionally, plays an essential role in the initiation and regulation of chromosomal replication. ATP-DnaA binds to the origin of replication (oriC) to initiate formation of the DNA replication initiation complex once per cell cycle. Binds the DnaA box (a 9 base pair repeat at the origin) and separates the double-stranded (ds)DNA. Forms a right-handed helical filament on oriC DNA; dsDNA binds to the exterior of the filament while single-stranded (ss)DNA is stabiized in the filament's interior. The ATP-DnaA-oriC complex binds and stabilizes one strand of the AT-rich DNA unwinding element (DUE), permitting loading of DNA polymerase. After initiation quickly degrades to an ADP-DnaA complex that is not apt for DNA replication. Binds acidic phospholipids. This is Chromosomal replication initiator protein DnaA from Dechloromonas aromatica (strain RCB).